Here is a 642-residue protein sequence, read N- to C-terminus: Conserved oligomeric Golgi complex subunit 6 (642 aa).

This sequence belongs to the COG6 family. Component of the conserved oligomeric Golgi complex which is composed of eight different subunits and is required for normal Golgi morphology and localization.

It is found in the golgi apparatus membrane. Its function is as follows. Required for normal Golgi function. This Caenorhabditis elegans protein is Conserved oligomeric Golgi complex subunit 6 (cogc-6).